The chain runs to 65 residues: Large ribosomal subunit protein bL35 (65 aa).

The protein belongs to the bacterial ribosomal protein bL35 family.

This chain is Large ribosomal subunit protein bL35, found in Nostoc sp. (strain PCC 7120 / SAG 25.82 / UTEX 2576).